Consider the following 171-residue polypeptide: Viral CASP8 and FADD-like apoptosis regulator (171 aa).

2 DED domains span residues 1 to 74 (MSHY…RIFG) and 92 to 171 (PFRC…NLQV).

As to quaternary structure, associates with the death-inducing signaling complex (DISC) formed by TNFRSF6, FADD and caspase-8. Interacts with FADD.

Functionally, inhibits TNFRSF1A, TNFRSF6, TNFRSF10 and TNFRSF12 induced apoptosis. May interfere with caspase-8 recruitment and activation at the death-inducing signaling complex (DISC). May lead to higher virus production and contribute to virus persistence and oncogenicity. The protein is Viral CASP8 and FADD-like apoptosis regulator of Equus caballus (Horse).